A 154-amino-acid chain; its full sequence is Fibroblast growth factor 2 (154 aa).

Residues 1-9 (MAAGSITSL) constitute a propeptide that is removed on maturation. A disordered region spans residues 1-20 (MAAGSITSLPALPEDGGGAF). Asn35 lines the heparin pocket. Residue Tyr81 is modified to Phosphotyrosine; by TEC. Residue Lys94 forms a Glycyl lysine isopeptide (Lys-Gly) (interchain with G-Cter in SUMO1) linkage. Residues 127–143 (KRTGQYKLGSKTGPGQK) are heparin-binding.

It belongs to the heparin-binding growth factors family. As to quaternary structure, monomer. Homodimer. Interacts with FGFR1, FGFR2, FGFR3 and FGFR4. Affinity between fibroblast growth factors (FGFs) and their receptors is increased by heparan sulfate glycosaminoglycans that function as coreceptors. Interacts with CSPG4, FGFBP1 and TEC. Found in a complex with FGFBP1, FGF1 and FGF2. Interacts with FGFBP3. Interacts with integrin ITGAV:ITGB3; the interaction is required for FGF2 signaling. Interacts with SNORC (via the extracellular domain). Interacts with GPC3. Post-translationally, phosphorylation at Tyr-81 regulates FGF2 unconventional secretion. Found in all tissues examined.

It localises to the secreted. The protein localises to the nucleus. Its function is as follows. Acts as a ligand for FGFR1, FGFR2, FGFR3 and FGFR4. Also acts as an integrin ligand which is required for FGF2 signaling. Binds to integrin ITGAV:ITGB3. Plays an important role in the regulation of cell survival, cell division, cell differentiation and cell migration. Functions as a potent mitogen in vitro. Can induce angiogenesis. Mediates phosphorylation of ERK1/2 and thereby promotes retinal lens fiber differentiation. The polypeptide is Fibroblast growth factor 2 (Fgf2) (Rattus norvegicus (Rat)).